Reading from the N-terminus, the 454-residue chain is tRNA modification GTPase MnmE (454 aa).

R23, E80, and K120 together coordinate (6S)-5-formyl-5,6,7,8-tetrahydrofolate. The TrmE-type G domain maps to G216–G377. Residue N226 coordinates K(+). Residues N226 to S231, T245 to T251, D270 to G273, N335 to D338, and S358 to R360 each bind GTP. S230 contacts Mg(2+). Residues T245, I247, and T250 each coordinate K(+). T251 contacts Mg(2+). K454 serves as a coordination point for (6S)-5-formyl-5,6,7,8-tetrahydrofolate.

Belongs to the TRAFAC class TrmE-Era-EngA-EngB-Septin-like GTPase superfamily. TrmE GTPase family. In terms of assembly, homodimer. Heterotetramer of two MnmE and two MnmG subunits. K(+) is required as a cofactor.

It is found in the cytoplasm. Functionally, exhibits a very high intrinsic GTPase hydrolysis rate. Involved in the addition of a carboxymethylaminomethyl (cmnm) group at the wobble position (U34) of certain tRNAs, forming tRNA-cmnm(5)s(2)U34. The protein is tRNA modification GTPase MnmE of Salmonella choleraesuis (strain SC-B67).